We begin with the raw amino-acid sequence, 376 residues long: Erythronate-4-phosphate dehydrogenase (376 aa).

Residues Ser-45 and Thr-66 each coordinate substrate. NAD(+) contacts are provided by residues 126–127 (QV), Asp-146, Thr-174, 201–203 (ASR), and Asp-227. The active site involves Arg-203. Glu-232 is an active-site residue. Residue His-249 is the Proton donor of the active site. Gly-252 lines the NAD(+) pocket. Tyr-253 serves as a coordination point for substrate.

It belongs to the D-isomer specific 2-hydroxyacid dehydrogenase family. PdxB subfamily. In terms of assembly, homodimer.

The protein localises to the cytoplasm. The enzyme catalyses 4-phospho-D-erythronate + NAD(+) = (R)-3-hydroxy-2-oxo-4-phosphooxybutanoate + NADH + H(+). Its pathway is cofactor biosynthesis; pyridoxine 5'-phosphate biosynthesis; pyridoxine 5'-phosphate from D-erythrose 4-phosphate: step 2/5. Its function is as follows. Catalyzes the oxidation of erythronate-4-phosphate to 3-hydroxy-2-oxo-4-phosphonooxybutanoate. The sequence is that of Erythronate-4-phosphate dehydrogenase from Ectopseudomonas mendocina (strain ymp) (Pseudomonas mendocina).